We begin with the raw amino-acid sequence, 193 residues long: UPF0397 protein PA0141 (193 aa).

A run of 5 helical transmembrane segments spans residues 11 to 31 (VTIA…SIPI), 43 to 63 (FLVF…GLLG), 69 to 89 (FFLF…LGFL), 109 to 129 (ILFF…LIAP), and 147 to 167 (GFLV…FLMS).

It belongs to the UPF0397 family.

Its subcellular location is the cell membrane. This is UPF0397 protein PA0141 from Phytoplasma australiense.